Reading from the N-terminus, the 286-residue chain is D-tagatose-1,6-bisphosphate aldolase subunit KbaY (286 aa).

Aspartate 82 acts as the Proton donor in catalysis. Histidine 83 and histidine 180 together coordinate Zn(2+). Glycine 181 is a binding site for dihydroxyacetone phosphate. Position 208 (histidine 208) interacts with Zn(2+). Residues 209–211 (GAS) and 230–233 (NVAT) each bind dihydroxyacetone phosphate.

This sequence belongs to the class II fructose-bisphosphate aldolase family. TagBP aldolase KbaY subfamily. In terms of assembly, homotetramer. Forms a complex with KbaZ. The cofactor is Zn(2+).

The catalysed reaction is D-tagatofuranose 1,6-bisphosphate = D-glyceraldehyde 3-phosphate + dihydroxyacetone phosphate. It participates in carbohydrate metabolism; D-tagatose 6-phosphate degradation; D-glyceraldehyde 3-phosphate and glycerone phosphate from D-tagatose 6-phosphate: step 2/2. Its function is as follows. Catalytic subunit of the tagatose-1,6-bisphosphate aldolase KbaYZ, which catalyzes the reversible aldol condensation of dihydroxyacetone phosphate (DHAP or glycerone-phosphate) with glyceraldehyde 3-phosphate (G3P) to produce tagatose 1,6-bisphosphate (TBP). Requires KbaZ subunit for full activity and stability. The sequence is that of D-tagatose-1,6-bisphosphate aldolase subunit KbaY from Escherichia coli O45:K1 (strain S88 / ExPEC).